The sequence spans 352 residues: UDP-N-acetylglucosamine--N-acetylmuramyl-(pentapeptide) pyrophosphoryl-undecaprenol N-acetylglucosamine transferase (352 aa).

Positions 195 and 287 each coordinate UDP-N-acetyl-alpha-D-glucosamine.

The protein belongs to the glycosyltransferase 28 family. MurG subfamily.

The protein resides in the cell membrane. It carries out the reaction Mur2Ac(oyl-L-Ala-gamma-D-Glu-L-Lys-D-Ala-D-Ala)-di-trans,octa-cis-undecaprenyl diphosphate + UDP-N-acetyl-alpha-D-glucosamine = beta-D-GlcNAc-(1-&gt;4)-Mur2Ac(oyl-L-Ala-gamma-D-Glu-L-Lys-D-Ala-D-Ala)-di-trans,octa-cis-undecaprenyl diphosphate + UDP + H(+). It participates in cell wall biogenesis; peptidoglycan biosynthesis. In terms of biological role, cell wall formation. Catalyzes the transfer of a GlcNAc subunit on undecaprenyl-pyrophosphoryl-MurNAc-pentapeptide (lipid intermediate I) to form undecaprenyl-pyrophosphoryl-MurNAc-(pentapeptide)GlcNAc (lipid intermediate II). The polypeptide is UDP-N-acetylglucosamine--N-acetylmuramyl-(pentapeptide) pyrophosphoryl-undecaprenol N-acetylglucosamine transferase (Streptococcus pneumoniae (strain ATCC BAA-255 / R6)).